The chain runs to 368 residues: Serine/threonine-protein phosphatase PP2A-like PPG1 (368 aa).

Mn(2+)-binding residues include Asp-50, His-52, Asp-78, and Asn-110. His-111 (proton donor) is an active-site residue. Positions 161 and 247 each coordinate Mn(2+).

The protein belongs to the PPP phosphatase family. PP-2A subfamily. In terms of assembly, inactivated in a complex with phosphatase methylesterase PPE1 (PP2Ai). Interacts with phosphatase 2A activator RRD1, which can reactivate PP2Ai by dissociating the catalytic subunit from the complex. Interacts with TAP42. Requires Mn(2+) as cofactor. Reversibly methyl esterified on Leu-368 by leucine carboxyl methyltransferase 1 (PPM1) and protein phosphatase methylesterase 1 (PPE1). Carboxyl methylation influences the affinity of the catalytic subunit for the different regulatory subunits, thereby modulating the PP2A holoenzyme's substrate specificity, enzyme activity and cellular localization.

The catalysed reaction is O-phospho-L-seryl-[protein] + H2O = L-seryl-[protein] + phosphate. The enzyme catalyses O-phospho-L-threonyl-[protein] + H2O = L-threonyl-[protein] + phosphate. In terms of biological role, involved in glycogen accumulation. This Saccharomyces cerevisiae (strain ATCC 204508 / S288c) (Baker's yeast) protein is Serine/threonine-protein phosphatase PP2A-like PPG1 (PPG1).